The following is a 423-amino-acid chain: CinA-like protein (423 aa).

This sequence belongs to the CinA family.

This is CinA-like protein from Chlorobium phaeobacteroides (strain DSM 266 / SMG 266 / 2430).